We begin with the raw amino-acid sequence, 396 residues long: 1-deoxy-D-xylulose 5-phosphate reductoisomerase (396 aa).

Thr15, Gly16, Ser17, Ile18, Gly41, and Asn129 together coordinate NADPH. Residue Lys130 participates in 1-deoxy-D-xylulose 5-phosphate binding. Glu131 lines the NADPH pocket. Asp155 serves as a coordination point for Mn(2+). Residues Ser156, Glu157, Ser182, and His205 each contribute to the 1-deoxy-D-xylulose 5-phosphate site. Residue Glu157 participates in Mn(2+) binding. NADPH is bound at residue Gly211. Residues Ser218, Asn223, Lys224, and Glu227 each coordinate 1-deoxy-D-xylulose 5-phosphate. Glu227 serves as a coordination point for Mn(2+).

This sequence belongs to the DXR family. Requires Mg(2+) as cofactor. Mn(2+) is required as a cofactor.

It catalyses the reaction 2-C-methyl-D-erythritol 4-phosphate + NADP(+) = 1-deoxy-D-xylulose 5-phosphate + NADPH + H(+). It functions in the pathway isoprenoid biosynthesis; isopentenyl diphosphate biosynthesis via DXP pathway; isopentenyl diphosphate from 1-deoxy-D-xylulose 5-phosphate: step 1/6. Functionally, catalyzes the NADPH-dependent rearrangement and reduction of 1-deoxy-D-xylulose-5-phosphate (DXP) to 2-C-methyl-D-erythritol 4-phosphate (MEP). This is 1-deoxy-D-xylulose 5-phosphate reductoisomerase from Xanthomonas campestris pv. campestris (strain B100).